We begin with the raw amino-acid sequence, 33 residues long: Alpha-amanitin proprotein (33 aa).

A propeptide spanning residues Met-1–Pro-10 is cleaved from the precursor. Ile-11 is modified ((3R,4R)-4,5-dihydroxyisoleucine; in form alpha-amanitin). Ile-11 carries the (3R,4S)-4-hydroxyisoleucine; in form gamma-amanitin modification. Residues Ile-11–Pro-18 constitute a cross-link (cyclopeptide (Ile-Pro)). A cross-link (2'-cysteinyl-6'-hydroxytryptophan sulfoxide (Trp-Cys)) is located at residues Trp-12–Cys-16. The residue at position 18 (Pro-18) is a 4-hydroxyproline. Positions Ser-19 to Ala-33 are excised as a propeptide.

Belongs to the MSDIN fungal toxin family. Post-translationally, processed by the macrocyclase-peptidase enzyme POPB to yield a toxic cyclic decapeptide. POPB first removes 10 residues from the N-terminus. Conformational trapping of the remaining peptide forces the enzyme to release this intermediate rather than proceed to macrocyclization. The enzyme rebinds the remaining peptide in a different conformation and catalyzes macrocyclization of the N-terminal 8 residues.

Its function is as follows. Major toxin belonging to the bicyclic octapeptides amatoxins that acts by binding non-competitively to RNA polymerase II and greatly slowing the elongation of transcripts from target promoters. The chain is Alpha-amanitin proprotein from Amanita rimosa.